The primary structure comprises 339 residues: Uricase (339 aa).

Residues K33 and T78 each act as charge relay system in the active site. The urate site is built by T78, D79, F201, R218, V266, Q267, and N293. The active-site Charge relay system is the H295. Residues 337 to 339 carry the Microbody targeting signal motif; it reads SHL.

The protein belongs to the uricase family.

The protein resides in the peroxisome. The enzyme catalyses urate + O2 + H2O = 5-hydroxyisourate + H2O2. It functions in the pathway purine metabolism; urate degradation; (S)-allantoin from urate: step 1/3. Catalyzes the oxidation of uric acid to 5-hydroxyisourate, which is further processed to form (S)-allantoin. In Drosophila subobscura (Fruit fly), this protein is Uricase (Uro).